We begin with the raw amino-acid sequence, 524 residues long: Serine/threonine-protein kinase PAK 2 (524 aa).

A disordered region spans residues 1-81 (MSDNGELEDK…PEISPPSDFE (81 aa)). The residue at position 2 (Ser-2) is an N-acetylserine. Phosphoserine occurs at positions 2, 20, 55, 58, and 59. Phosphothreonine is present on Thr-60. The residue at position 62 (Lys-62) is an N6-acetyllysine. Ser-64 is subject to Phosphoserine. A compositionally biased stretch (basic and acidic residues) spans 67-81 (KEKERPEISPPSDFE). The tract at residues 69-112 (KERPEISPPSDFEHTIHVGFDAVTGEFTGMPEQWARLLQTSNIT) is GTPase-binding. The segment at 69 to 137 (KERPEISPPS…KFYDSNTVKQ (69 aa)) is autoregulatory region. In terms of domain architecture, CRIB spans 74-87 (ISPPSDFEHTIHVG). Positions 88-248 (FDAVTGEFTG…IVSIGDPKKK (161 aa)) are linker. Lys-128 carries the N6-acetyllysine modification. Thr-134 bears the Phosphothreonine mark. Residue Tyr-139 is modified to Phosphotyrosine. Ser-141 is modified (phosphoserine). Positions 142 to 190 (FTPPEKDGFPSGTPALNTKGSETSAVVTEEDDDDEDAAPPVIAPRPDHT) are disordered. Phosphothreonine is present on Thr-143. Residue Ser-152 is modified to Phosphoserine. Phosphothreonine occurs at positions 154, 159, and 169. Polar residues predominate over residues 155–167 (PALNTKGSETSAV). The span at 169–178 (TEEDDDDEDA) shows a compositional bias: acidic residues. Position 197 is a phosphoserine (Ser-197). Positions 204 to 228 (APVGDSNVDSGAKSSDKQKKKAKMT) are disordered. Positions 245-251 (PKKKYTR) match the Nuclear localization signal motif. Positions 249–500 (YTRYEKIGQG…AKELLQHPFL (252 aa)) constitute a Protein kinase domain. ATP is bound by residues 255–263 (IGQGASGTV) and Lys-278. Catalysis depends on Asp-368, which acts as the Proton acceptor. Thr-402 carries the phosphothreonine; by autocatalysis modification.

It belongs to the protein kinase superfamily. STE Ser/Thr protein kinase family. STE20 subfamily. In terms of assembly, interacts tightly with GTP-bound but not GDP-bound CDC42/p21 and RAC1. Interacts with SH3MD4. Interacts with SCRIB. Interacts with ARHGEF7 and GIT1. PAK-2p34 interacts with ARHGAP10. Interacts with RAC1. Full-length PAK2 is autophosphorylated when activated by CDC42/p21. Following cleavage, both peptides, PAK-2p27 and PAK-2p34, become highly autophosphorylated. Autophosphorylation of PAK-2p27 can occur in the absence of any effectors and is dependent on phosphorylation of Thr-402, because PAK-2p27 is acting as an exogenous substrate. Post-translationally, during apoptosis proteolytically cleaved by caspase-3 or caspase-3-like proteases to yield active PAK-2p34. In terms of processing, ubiquitinated, leading to its proteasomal degradation.

The protein localises to the cytoplasm. It localises to the nucleus. The protein resides in the perinuclear region. It is found in the membrane. It catalyses the reaction L-seryl-[protein] + ATP = O-phospho-L-seryl-[protein] + ADP + H(+). It carries out the reaction L-threonyl-[protein] + ATP = O-phospho-L-threonyl-[protein] + ADP + H(+). Its activity is regulated as follows. Activated by binding small G proteins. Binding of GTP-bound CDC42 or RAC1 to the autoregulatory region releases monomers from the autoinhibited dimer, enables phosphorylation of Thr-402 and allows the kinase domain to adopt an active structure. Following caspase cleavage, autophosphorylated PAK-2p34 is constitutively active. Its function is as follows. Serine/threonine protein kinase that plays a role in a variety of different signaling pathways including cytoskeleton regulation, cell motility, cell cycle progression, apoptosis or proliferation. Acts as a downstream effector of the small GTPases CDC42 and RAC1. Activation by the binding of active CDC42 and RAC1 results in a conformational change and a subsequent autophosphorylation on several serine and/or threonine residues. Full-length PAK2 stimulates cell survival and cell growth. Phosphorylates MAPK4 and MAPK6 and activates the downstream target MAPKAPK5, a regulator of F-actin polymerization and cell migration. Phosphorylates JUN and plays an important role in EGF-induced cell proliferation. Phosphorylates many other substrates including histone H4 to promote assembly of H3.3 and H4 into nucleosomes, BAD, ribosomal protein S6, or MBP. Phosphorylates CASP7, thereby preventing its activity. Additionally, associates with ARHGEF7 and GIT1 to perform kinase-independent functions such as spindle orientation control during mitosis. On the other hand, apoptotic stimuli such as DNA damage lead to caspase-mediated cleavage of PAK2, generating PAK-2p34, an active p34 fragment that translocates to the nucleus and promotes cellular apoptosis involving the JNK signaling pathway. Caspase-activated PAK2 phosphorylates MKNK1 and reduces cellular translation. This Rattus norvegicus (Rat) protein is Serine/threonine-protein kinase PAK 2 (Pak2).